Here is a 302-residue protein sequence, read N- to C-terminus: Zinc transporter ZIP1 (302 aa).

Over 1 to 6 (MDYLLQ) the chain is Extracellular. The helical transmembrane segment at 7–27 (VKVGALVGLLLLTLFFGFIPA) threads the bilayer. The Cytoplasmic segment spans residues 28–44 (RMKWFHVTGGTELHKAV). Residues 45–65 (LSFVSCFAGGVFLSACLLDII) traverse the membrane as a helical segment. Over 66-86 (PDYLSDIHGELQKRDLDDGFP) the chain is Extracellular. A helical transmembrane segment spans residues 87 to 107 (LPEFIMACGFFTVLILEKMVL). The Cytoplasmic portion of the chain corresponds to 108-158 (SCTEGHRNEETAPLLAPAAPNGHAHGHPSVNDLEGSGHHVHVDFHAHSSFR). Residues 159-179 (SFMLFLSLSLHSVFEGLAIGL) traverse the membrane as a helical segment. The Extracellular portion of the chain corresponds to 180–185 (QTTNAK). The chain crosses the membrane as a helical span at residues 186–206 (VLEICIAILVHKSIIVFSLSV). Topologically, residues 207 to 219 (KLVQSAVKPLWVV) are cytoplasmic. Residues 220 to 240 (LYVTVFAIMSPLGIGIGIVVI) form a helical membrane-spanning segment. At 241–247 (ETERQAG) the chain is on the extracellular side. The helical transmembrane segment at 248 to 268 (GLIQAVLEGLAAGTFIYITFL) threads the bilayer. Residues 269 to 281 (EILPHELNSSERP) are Cytoplasmic-facing. A helical transmembrane segment spans residues 282–302 (LLKVLFLLCGFSIMAALCFLG).

The protein belongs to the ZIP transporter (TC 2.A.5) family. In terms of tissue distribution, ubiquitous. Highest levels in ovary, high levels in heart, eye, kidney and brain, moderate levels in intestine and low levels in gill and skin.

It is found in the cell membrane. Its subcellular location is the endoplasmic reticulum membrane. It catalyses the reaction Zn(2+)(in) = Zn(2+)(out). Transporter for the divalent cation Zn(2+). Mediates the influx of Zn(2+) into cells from extracellular space. The sequence is that of Zinc transporter ZIP1 (slc39a1) from Danio rerio (Zebrafish).